The primary structure comprises 205 residues: NADH dehydrogenase (205 aa).

FMN-binding positions include 17 to 21 (RRSIR), Gln-73, 158 to 159 (LG), and Arg-195.

Belongs to the nitroreductase family. In terms of assembly, homodimer. The cofactor is FMN.

It carries out the reaction a ubiquinone + NADH + 5 H(+)(in) = a ubiquinol + NAD(+) + 4 H(+)(out). Can oxidize either NADH or NADPH with a preference for NADH. Can catalyze electron transfer from NADH to various electron acceptors which include, in addition to molecular oxygen, cytochrome c, 2,6 dichlorphenolindophenol, methylene blue, ferricyanide or P-nitroblue tetrazolium. This Thermus thermophilus (strain ATCC 27634 / DSM 579 / HB8) protein is NADH dehydrogenase (nox).